The chain runs to 419 residues: BTB/POZ domain-containing protein KCTD20 (419 aa).

The BTB domain maps to 117 to 191; that stretch reads EKVTLLVDGT…YKTGIINCPD (75 aa).

In terms of assembly, interacts with AKT1; AKT2 and AKT3. Interacts with PPP2CA and PPP1CA. Part of a complex containing MARK4. In terms of tissue distribution, ubiquitously expressed.

It localises to the cytoplasm. Functionally, promotes the phosphorylation of AKT family members. This is BTB/POZ domain-containing protein KCTD20 (Kctd20) from Mus musculus (Mouse).